A 428-amino-acid chain; its full sequence is Serine--tRNA ligase (428 aa).

231–233 (TAE) serves as a coordination point for L-serine. 262 to 264 (RAE) is an ATP binding site. Residue Glu285 participates in L-serine binding. 349–352 (EISS) provides a ligand contact to ATP. Ser385 provides a ligand contact to L-serine.

This sequence belongs to the class-II aminoacyl-tRNA synthetase family. Type-1 seryl-tRNA synthetase subfamily. Homodimer. The tRNA molecule binds across the dimer.

The protein localises to the cytoplasm. The catalysed reaction is tRNA(Ser) + L-serine + ATP = L-seryl-tRNA(Ser) + AMP + diphosphate + H(+). It carries out the reaction tRNA(Sec) + L-serine + ATP = L-seryl-tRNA(Sec) + AMP + diphosphate + H(+). Its pathway is aminoacyl-tRNA biosynthesis; selenocysteinyl-tRNA(Sec) biosynthesis; L-seryl-tRNA(Sec) from L-serine and tRNA(Sec): step 1/1. In terms of biological role, catalyzes the attachment of serine to tRNA(Ser). Is also able to aminoacylate tRNA(Sec) with serine, to form the misacylated tRNA L-seryl-tRNA(Sec), which will be further converted into selenocysteinyl-tRNA(Sec). The protein is Serine--tRNA ligase of Methylorubrum extorquens (strain CM4 / NCIMB 13688) (Methylobacterium extorquens).